Reading from the N-terminus, the 440-residue chain is Dynein axonemal assembly factor 11 (440 aa).

4 LRR repeats span residues 20–43 (IFSLEELSLHQQDIQRIEHIHKWC), 44–65 (RDLKILYLQNNLIPKIENVGRL), 66–89 (KKLEYLNLALNNIEVIENLEGCES), and 90–110 (LQKLDLTVNFVGRLSSVETLK). One can recognise an LRRCT domain in the interval 128–146 (YQGYRQYVVATVPQLQSLD). The segment covering 178–192 (EEREKQKSNANEHPE) has biased composition (basic and acidic residues). Disordered regions lie at residues 178-267 (EERE…RTLI) and 363-440 (PKKR…PPLM). The span at 193 to 211 (INQSLSESQNGTQQYPESS) shows a compositional bias: polar residues. Basic and acidic residues predominate over residues 236–259 (SRLEAHRHLEEKRRANEKEKEKPK). The region spanning 276-374 (VNEPKLDFSL…KRTIRPTSVT (99 aa)) is the CS domain. A compositionally biased stretch (polar residues) spans 369–378 (RPTSVTSNQN). 2 stretches are compositionally biased toward basic and acidic residues: residues 379-392 (NKKDTRAAPRRELL) and 420-431 (GLEERPVSKDFV).

It belongs to the tilB family. As to quaternary structure, interacts with dvl2. Interacts with kur. As to expression, expressed in kinocilia of hair cells.

It localises to the cytoplasm. Its subcellular location is the dynein axonemal particle. The protein localises to the cell projection. It is found in the cilium. Functionally, plays a crucial role in regulating cilia motility in pronephric tubules, cloaca and neural tube. Required for establishing left-right asymmetry of the body plan; controls cell fate and convergent extension (CE) movements during gastrulation, respectively, via the Wnt and the planar cell polarity (PCP) signaling pathways. Required for the proper development of renal glomeruli and tubules. The protein is Dynein axonemal assembly factor 11 (dnaaf11) of Danio rerio (Zebrafish).